We begin with the raw amino-acid sequence, 1241 residues long: ATP-dependent helicase/nuclease subunit A (1241 aa).

In terms of domain architecture, UvrD-like helicase ATP-binding spans 12 to 485 (SQWTDDQWKA…IDLAKNFRSR (474 aa)). Position 33-40 (33-40 (AAAGSGKT)) interacts with ATP. The region spanning 505–805 (GEIDYDADAE…RIMTIHKSKG (301 aa)) is the UvrD-like helicase C-terminal domain.

The protein belongs to the helicase family. AddA subfamily. In terms of assembly, heterodimer of AddA and AddB/RexB. It depends on Mg(2+) as a cofactor.

The enzyme catalyses Couples ATP hydrolysis with the unwinding of duplex DNA by translocating in the 3'-5' direction.. The catalysed reaction is ATP + H2O = ADP + phosphate + H(+). In terms of biological role, the heterodimer acts as both an ATP-dependent DNA helicase and an ATP-dependent, dual-direction single-stranded exonuclease. Recognizes the chi site generating a DNA molecule suitable for the initiation of homologous recombination. The AddA nuclease domain is required for chi fragment generation; this subunit has the helicase and 3' -&gt; 5' nuclease activities. In Bacillus thuringiensis subsp. konkukian (strain 97-27), this protein is ATP-dependent helicase/nuclease subunit A.